The following is a 310-amino-acid chain: Quinolinate synthase 2 (310 aa).

The iminosuccinate site is built by H30 and S47. Position 92 (C92) interacts with [4Fe-4S] cluster. Iminosuccinate-binding positions include 118 to 120 and S135; that span reads YVN. C177 contacts [4Fe-4S] cluster. Residues 203–205 and T220 contribute to the iminosuccinate site; that span reads HPE. C265 provides a ligand contact to [4Fe-4S] cluster.

Belongs to the quinolinate synthase family. Type 2 subfamily. [4Fe-4S] cluster serves as cofactor.

It is found in the cytoplasm. The enzyme catalyses iminosuccinate + dihydroxyacetone phosphate = quinolinate + phosphate + 2 H2O + H(+). It participates in cofactor biosynthesis; NAD(+) biosynthesis; quinolinate from iminoaspartate: step 1/1. Its function is as follows. Catalyzes the condensation of iminoaspartate with dihydroxyacetone phosphate to form quinolinate. This chain is Quinolinate synthase 2, found in Methanosarcina acetivorans (strain ATCC 35395 / DSM 2834 / JCM 12185 / C2A).